Consider the following 346-residue polypeptide: D-alanine--D-alanine ligase (346 aa).

Residues 133–327 (KLYAKSVGVK…ALADQISLEK (195 aa)) form the ATP-grasp domain. ATP is bound at residue 159–211 (LSFPCIIKPARLGSSIGISIVKDEKDLEYAKDVGFEFDNDLVVEEFKNNIKEY). Mg(2+) contacts are provided by Asp284, Glu296, and Asn298.

It belongs to the D-alanine--D-alanine ligase family. Mg(2+) serves as cofactor. It depends on Mn(2+) as a cofactor.

The protein resides in the cytoplasm. It catalyses the reaction 2 D-alanine + ATP = D-alanyl-D-alanine + ADP + phosphate + H(+). It functions in the pathway cell wall biogenesis; peptidoglycan biosynthesis. In terms of biological role, cell wall formation. The sequence is that of D-alanine--D-alanine ligase from Campylobacter jejuni subsp. jejuni serotype O:23/36 (strain 81-176).